The primary structure comprises 336 residues: Ketoreductase adrE (336 aa).

Tyr171 contacts NADP(+).

It belongs to the NAD(P)-dependent epimerase/dehydratase family. Dihydroflavonol-4-reductase subfamily.

It participates in secondary metabolite biosynthesis; terpenoid biosynthesis. In terms of biological role, ketoreductase; part of the gene cluster that mediates the biosynthesis of andrastins, meroterpenoid compounds that exhibit inhibitory activity against ras farnesyltransferase, suggesting that they could be promising leads for antitumor agents. The first step of the pathway is the synthesis of 3,5-dimethylorsellinic acid (DMOA) by the polyketide synthase adrD via condensation of one acetyl-CoA starter unit with 3 malonyl-CoA units and 2 methylations. DMAO is then converted to farnesyl-DMAO by the prenyltransferase adrG. The methyltransferase adrK catalyzes the methylation of the carboxyl group of farnesyl-DMAO to farnesyl-DMAO methyl ester which is further converted to epoxyfarnesyl-DMAO methyl ester by the FAD-dependent monooxygenase adrH. The terpene cyclase adrI then catalyzes the carbon skeletal rearrangement to generate the andrastin E, the first compound in the pathway having the andrastin scaffold, with the tetracyclic ring system. The post-cyclization tailoring enzymes adrF, adrE, adrJ, and adrA, are involved in the conversion of andrastin E into andrastin A. The short chain dehydrogenase adrF is responsible for the oxidation of the C-3 a hydroxyl group of andrastin E to yield the corresponding ketone, andrastin D. The ketoreductase adrE stereoselectively reduces the carbonyl moiety to reverse the stereochemistry of the C-3 position to yield andrastin F. The acetyltransferase adrJ is the acetyltransferase that attaches the acetyl group to the C-3 hydroxyl group of andrastin F to yield andrastin C. Finally, the cytochrome P450 monooxygenase adrA catalyzes two sequential oxidation reactions of the C-23 methyl group, to generate the corresponding alcohol andrastin B, and aldehyde andrastin A. The chain is Ketoreductase adrE from Penicillium rubens (strain ATCC 28089 / DSM 1075 / NRRL 1951 / Wisconsin 54-1255) (Penicillium chrysogenum).